Consider the following 261-residue polypeptide: UPF0328 protein ECU06_0100 (261 aa).

Belongs to the UPF0328 family.

The chain is UPF0328 protein ECU06_0100 from Encephalitozoon cuniculi (strain GB-M1) (Microsporidian parasite).